The sequence spans 460 residues: Lipase member I (460 aa).

Residues 1-15 (MRVYIFLCLMCWVRS) form the signal peptide. Residue Asn63 is glycosylated (N-linked (GlcNAc...) asparagine). Ser159 (nucleophile) is an active-site residue. The active-site Charge relay system is Asp183. A disulfide bond links Cys238 and Cys251. His253 (charge relay system) is an active-site residue. Disulfide bonds link Cys275/Cys286 and Cys289/Cys297. Asn396 carries N-linked (GlcNAc...) asparagine glycosylation. Cys436 and Cys455 are joined by a disulfide.

It belongs to the AB hydrolase superfamily. Lipase family. In terms of assembly, interacts with heparin with a high affinity. Expressed in testis. Expressed exclusively at the connecting piece of the sperm.

It is found in the cell membrane. Its subcellular location is the secreted. The catalysed reaction is 1-hexadecanoyl-2-(9Z-octadecenoyl)-sn-glycero-3-phosphate + H2O = 2-(9Z-octadecenoyl)-sn-glycero-3-phosphate + hexadecanoate + H(+). Its activity is regulated as follows. Inhibited by sodium vanadate. In terms of biological role, hydrolyzes specifically phosphatidic acid (PA) to produce 2-acyl lysophosphatidic acid (LPA; a potent bioactive lipid mediator) and fatty acid. Does not hydrolyze other phospholipids, like phosphatidylserine (PS), phosphatidylcholine (PC) and phosphatidylethanolamine (PE) or triacylglycerol (TG). This is Lipase member I (LIPI) from Homo sapiens (Human).